Reading from the N-terminus, the 330-residue chain is Aspartate--ammonia ligase (330 aa).

The protein belongs to the class-II aminoacyl-tRNA synthetase family. AsnA subfamily.

Its subcellular location is the cytoplasm. The enzyme catalyses L-aspartate + NH4(+) + ATP = L-asparagine + AMP + diphosphate + H(+). The protein operates within amino-acid biosynthesis; L-asparagine biosynthesis; L-asparagine from L-aspartate (ammonia route): step 1/1. The polypeptide is Aspartate--ammonia ligase (Streptococcus uberis (strain ATCC BAA-854 / 0140J)).